The following is a 689-amino-acid chain: Glycine--tRNA ligase beta subunit (689 aa).

It belongs to the class-II aminoacyl-tRNA synthetase family. In terms of assembly, tetramer of two alpha and two beta subunits.

The protein resides in the cytoplasm. The enzyme catalyses tRNA(Gly) + glycine + ATP = glycyl-tRNA(Gly) + AMP + diphosphate. The polypeptide is Glycine--tRNA ligase beta subunit (Actinobacillus succinogenes (strain ATCC 55618 / DSM 22257 / CCUG 43843 / 130Z)).